The sequence spans 63 residues: Small ribosomal subunit protein eS17 (63 aa).

This sequence belongs to the eukaryotic ribosomal protein eS17 family.

The chain is Small ribosomal subunit protein eS17 from Methanococcus aeolicus (strain ATCC BAA-1280 / DSM 17508 / OCM 812 / Nankai-3).